The sequence spans 154 residues: Putative pre-16S rRNA nuclease (154 aa).

This sequence belongs to the YqgF nuclease family.

It localises to the cytoplasm. Functionally, could be a nuclease involved in processing of the 5'-end of pre-16S rRNA. The sequence is that of Putative pre-16S rRNA nuclease from Rickettsia conorii (strain ATCC VR-613 / Malish 7).